Here is a 301-residue protein sequence, read N- to C-terminus: MAPQLLSSSNFKSLFDSVDTFLFDCDGVIWKGETLIDGVSQTLDLIRSKGKNVVFVTNNSVKSRRQYAEKFRSLGVTSITQDEIFSSSFAAAMYLKVNNFPKDKKVYVIGGEGVLEELQIAGFTGLGGPEDGEKKAQWKSNSLFEHDKSVGAVVVGLDPNINYYKLQYGTLCVRENPGCLFIATNRDAVGHMTDLQEWPGAGCMVAAMCGSTEREPIVVGKPSTFMMDFLLQKFGTETSRMCMVGDRLDTDILFGQNAGCKTLLVLTGVTSESNLLDKGNKIEPDYYTSTVSDIIKLMESP.

D19 (nucleophile) is an active-site residue.

It belongs to the HAD-like hydrolase superfamily. CbbY/CbbZ/Gph/YieH family.

It carries out the reaction 2-phosphoglycolate + H2O = glycolate + phosphate. Dephosphorylates 2-phosphoglycolate, but does not contribute to photorespiratory metabolism. The chain is Phosphoglycolate phosphatase 2 (PGLP2) from Arabidopsis thaliana (Mouse-ear cress).